The following is a 130-amino-acid chain: Small ribosomal subunit protein uS9 (130 aa).

It belongs to the universal ribosomal protein uS9 family.

This chain is Small ribosomal subunit protein uS9, found in Aeromonas hydrophila subsp. hydrophila (strain ATCC 7966 / DSM 30187 / BCRC 13018 / CCUG 14551 / JCM 1027 / KCTC 2358 / NCIMB 9240 / NCTC 8049).